The following is a 282-amino-acid chain: Endochitinase 4 (282 aa).

The GH18 domain occupies glycine 1–lysine 282. Residue glutamate 112 is the Proton donor of the active site. Asparagine 265 carries N-linked (GlcNAc...) asparagine glycosylation.

This sequence belongs to the glycosyl hydrolase 18 family. Chitinase class V subfamily.

It is found in the secreted. The enzyme catalyses Random endo-hydrolysis of N-acetyl-beta-D-glucosaminide (1-&gt;4)-beta-linkages in chitin and chitodextrins.. In terms of biological role, secreted chitinase involved in the degradation of chitin, a component of the cell walls of fungi and exoskeletal elements of some animals (including worms and arthropods). Participates in the infection process and directly acts in the penetration process of the host cuticle. This is Endochitinase 4 (chi4) from Metarhizium anisopliae (Entomophthora anisopliae).